The following is a 1252-amino-acid chain: DNA-directed RNA polymerase subunit beta (1252 aa).

It belongs to the RNA polymerase beta chain family. The RNAP catalytic core consists of 2 alpha, 1 beta, 1 beta' and 1 omega subunit. When a sigma factor is associated with the core the holoenzyme is formed, which can initiate transcription.

The catalysed reaction is RNA(n) + a ribonucleoside 5'-triphosphate = RNA(n+1) + diphosphate. Functionally, DNA-dependent RNA polymerase catalyzes the transcription of DNA into RNA using the four ribonucleoside triphosphates as substrates. The sequence is that of DNA-directed RNA polymerase subunit beta from Chlamydia trachomatis serovar D (strain ATCC VR-885 / DSM 19411 / UW-3/Cx).